The following is a 163-amino-acid chain: Large ribosomal subunit protein uL10 (163 aa).

This sequence belongs to the universal ribosomal protein uL10 family. In terms of assembly, part of the ribosomal stalk of the 50S ribosomal subunit. The N-terminus interacts with L11 and the large rRNA to form the base of the stalk. The C-terminus forms an elongated spine to which L12 dimers bind in a sequential fashion forming a multimeric L10(L12)X complex.

In terms of biological role, forms part of the ribosomal stalk, playing a central role in the interaction of the ribosome with GTP-bound translation factors. This is Large ribosomal subunit protein uL10 from Glaesserella parasuis serovar 5 (strain SH0165) (Haemophilus parasuis).